The primary structure comprises 262 residues: Indole-3-glycerol phosphate synthase (262 aa).

This sequence belongs to the TrpC family.

It catalyses the reaction 1-(2-carboxyphenylamino)-1-deoxy-D-ribulose 5-phosphate + H(+) = (1S,2R)-1-C-(indol-3-yl)glycerol 3-phosphate + CO2 + H2O. It participates in amino-acid biosynthesis; L-tryptophan biosynthesis; L-tryptophan from chorismate: step 4/5. This Bordetella petrii (strain ATCC BAA-461 / DSM 12804 / CCUG 43448) protein is Indole-3-glycerol phosphate synthase.